A 301-amino-acid polypeptide reads, in one-letter code: UDP-3-O-acyl-N-acetylglucosamine deacetylase (301 aa).

Positions 81, 237, and 241 each coordinate Zn(2+). Catalysis depends on histidine 264, which acts as the Proton donor.

This sequence belongs to the LpxC family. Zn(2+) is required as a cofactor.

It carries out the reaction a UDP-3-O-[(3R)-3-hydroxyacyl]-N-acetyl-alpha-D-glucosamine + H2O = a UDP-3-O-[(3R)-3-hydroxyacyl]-alpha-D-glucosamine + acetate. It participates in glycolipid biosynthesis; lipid IV(A) biosynthesis; lipid IV(A) from (3R)-3-hydroxytetradecanoyl-[acyl-carrier-protein] and UDP-N-acetyl-alpha-D-glucosamine: step 2/6. Catalyzes the hydrolysis of UDP-3-O-myristoyl-N-acetylglucosamine to form UDP-3-O-myristoylglucosamine and acetate, the committed step in lipid A biosynthesis. The protein is UDP-3-O-acyl-N-acetylglucosamine deacetylase of Leptospira borgpetersenii serovar Hardjo-bovis (strain JB197).